We begin with the raw amino-acid sequence, 260 residues long: Large ribosomal subunit protein uL2 (260 aa).

A disordered region spans residues 208 to 230; that stretch reads EHPHGGGNHQHIGHPSTVRRDAS.

This sequence belongs to the universal ribosomal protein uL2 family.

The protein resides in the cytoplasm. The polypeptide is Large ribosomal subunit protein uL2 (Caenorhabditis elegans).